We begin with the raw amino-acid sequence, 353 residues long: Phosphate acyltransferase (353 aa).

It belongs to the PlsX family. In terms of assembly, homodimer. Probably interacts with PlsY.

Its subcellular location is the cytoplasm. The enzyme catalyses a fatty acyl-[ACP] + phosphate = an acyl phosphate + holo-[ACP]. It functions in the pathway lipid metabolism; phospholipid metabolism. Catalyzes the reversible formation of acyl-phosphate (acyl-PO(4)) from acyl-[acyl-carrier-protein] (acyl-ACP). This enzyme utilizes acyl-ACP as fatty acyl donor, but not acyl-CoA. This Rhodopseudomonas palustris (strain BisB18) protein is Phosphate acyltransferase.